Reading from the N-terminus, the 216-residue chain is Octanoyltransferase (216 aa).

The region spanning 33-212 (AHTPDELWLV…ILSNILGLTA (180 aa)) is the BPL/LPL catalytic domain. Substrate contacts are provided by residues 72 to 79 (RGGQVTYH), 139 to 141 (SLG), and 152 to 154 (GVA). Cysteine 170 serves as the catalytic Acyl-thioester intermediate.

The protein belongs to the LipB family.

It is found in the cytoplasm. It carries out the reaction octanoyl-[ACP] + L-lysyl-[protein] = N(6)-octanoyl-L-lysyl-[protein] + holo-[ACP] + H(+). Its pathway is protein modification; protein lipoylation via endogenous pathway; protein N(6)-(lipoyl)lysine from octanoyl-[acyl-carrier-protein]: step 1/2. Functionally, catalyzes the transfer of endogenously produced octanoic acid from octanoyl-acyl-carrier-protein onto the lipoyl domains of lipoate-dependent enzymes. Lipoyl-ACP can also act as a substrate although octanoyl-ACP is likely to be the physiological substrate. The polypeptide is Octanoyltransferase (Saccharophagus degradans (strain 2-40 / ATCC 43961 / DSM 17024)).